The following is a 331-amino-acid chain: Beta-ketoacyl-[acyl-carrier-protein] synthase III (331 aa).

Residues Cys113 and His253 contribute to the active site. The tract at residues 254 to 258 (QANTR) is ACP-binding. The active site involves Asn283.

It belongs to the thiolase-like superfamily. FabH family. Homodimer.

It localises to the cytoplasm. The catalysed reaction is malonyl-[ACP] + acetyl-CoA + H(+) = 3-oxobutanoyl-[ACP] + CO2 + CoA. The protein operates within lipid metabolism; fatty acid biosynthesis. In terms of biological role, catalyzes the condensation reaction of fatty acid synthesis by the addition to an acyl acceptor of two carbons from malonyl-ACP. Catalyzes the first condensation reaction which initiates fatty acid synthesis and may therefore play a role in governing the total rate of fatty acid production. Possesses both acetoacetyl-ACP synthase and acetyl transacylase activities. Its substrate specificity determines the biosynthesis of branched-chain and/or straight-chain of fatty acids. This chain is Beta-ketoacyl-[acyl-carrier-protein] synthase III, found in Desulfitobacterium hafniense (strain Y51).